The sequence spans 793 residues: MADAWEEIRRLAADFQRAQFAESTQRLSERNCIEIVNKLISQKQLEVVHTLDGKEYITPAQISKEMRDELHVRGGRVNIVDLQQVINVDLTHIESRVSDIIKSEKHVQMVLGQLIDENYLDQLSEEVNDKLQESGQVTVSELCKAYDLPGDFLTQALTQRLGRIINGHLDLDNRGVIFTEAFVARHKARIRGLFSAITRPTPVNSLVSKYGFQEQLLYSVLEDLVSTGRLRGTVVGGRQDKAVFVPDIYSRTQSTWVDSFFRQNGYLEFDALSRLGIPDAVNYIKKRYKNTQLLFLKATCVGQGLVDQVEASVEEAISSGTWVDISPLLPSSLSVEDAAMLLQQVMRPFGKLASAIVFSDTVVVSEKFITDCTGLFSERMHQKAEKEMKNNPVHLITEEDLKQISILESVNTSKKDKKDERRKKATEGSGSVRGGGGGNAREYKIKKTKKKGRKDEDSDDESQSSHGGKKKPDITFMFQDEIEDCLRKHIQDAPEEFISELAEYLIKPLNKMYLEVVRSVFMSSTSASGTGRKRTIKDLQEEVSNLYNNIRLFEKGMKYFADDTQTALTKHLLKTVCTDITNLMFNFLASDFLMAVEEPAAITSDIRKKILSKLTEETKVALTKLHNSLNEKSIEDFLSCLDSATEACDIMVKKGDKKRERQILFQHRQALCEQLKVTEDPALILHLTAVLLFQLSTHSMLHAPGRCVPQIIAFLHSKIPEDQHTLLVKYQGLVVKQLVSQNKKTGQGEDPSSDELDKEQHDVTNATRKELQELSLSIKDLVLKSRKSSVTEE.

At Ala-2 the chain carries N-acetylalanine. The interval 2–200 (ADAWEEIRRL…RGLFSAITRP (199 aa)) is mediates interaction with DDRGK1. Positions 2–212 (ADAWEEIRRL…VNSLVSKYGF (211 aa)) are required for E3 UFM1-protein ligase activity. Positions 121–250 (DQLSEEVNDK…KAVFVPDIYS (130 aa)) are involved in CDK5RAP3-binding. Positions 200–400 (PTPVNSLVSK…NPVHLITEED (201 aa)) are mediates interaction with TRIP4. A disordered region spans residues 410 to 473 (VNTSKKDKKD…SSHGGKKKPD (64 aa)). Position 433 is an omega-N-methylarginine (Arg-433). Residues Ser-458 and Ser-462 each carry the phosphoserine modification. A mediates interaction with CDK5RAP3 region spans residues 490 to 683 (IQDAPEEFIS…QLKVTEDPAL (194 aa)). Phosphothreonine is present on Thr-535. A disordered region spans residues 742–765 (NKKTGQGEDPSSDELDKEQHDVTN). 2 positions are modified to phosphoserine: Ser-752 and Ser-753.

It belongs to the UFL1 family. Catalytic component of the UFM1 ribosome E3 ligase (UREL) complex, composed of UFL1, DDRGK1 and CDK5RAP3. Interacts with E2-like enzyme UFC1. Interacts with RELA. Interacts with NBN; promoting recruitment to double-strand breaks following DNA damage. Interacts (when phosphorylated) with YWHAG/14-3-3-gamma; sequestering UFL1 and preventing its association with PDCD1/PD-1 substrate. Ubiquitinated, leading to its degradation by the proteasome. Interaction with CDK5RAP3 protects both proteins against ubiquitination and degradation via the proteasome. Post-translationally, phosphorylated at Ser-462 by ATM, enhancing protein ligase activity and promoting ATM activation in a positive feedback loop. Phosphorylation at Thr-535 by AMPK promotes its interaction with YWHAG/14-3-3-gamma, thereby preventing UFL1 association with PDCD1/PD-1 substrate. Ubiquitously expressed with higher expression in pancreatic islets and other secretory tissues. In the embryonic brain at 17 dpc, detected in Sox2-positive neural stem cells and in Slc1a3/GLAST-positive radial glia. In perinatal brain, highly expressed in Slc1a3-positive Bergmann glia of the cerebellum. Continues to be expressed in Bergmann glia of adult brain at 16 weeks. Expressed in adult heart. Highly expressed in the intestinal exocrine cells.

It localises to the endoplasmic reticulum membrane. The protein localises to the cytoplasm. The protein resides in the cytosol. Its subcellular location is the nucleus. It is found in the chromosome. In terms of biological role, E3 protein ligase that mediates ufmylation, the covalent attachment of the ubiquitin-like modifier UFM1 to lysine residues on target proteins, and which plays a key role in various processes, such as ribosome recycling, response to DNA damage, interferon response or reticulophagy (also called ER-phagy). Catalyzes ufmylation of many protein, such as CD274/PD-L1, CDK5RAP3, CYB5R3, DDRGK1, EIF6, histone H4, MRE11, P4HB, PDCD1/PD-1, TRIP4, RPN1, RPS20/uS10, RPL10/uL16, RPL26/uL24, SYVN1/HRD1 and TP53/p53. As part of the UREL complex, plays a key role in ribosome recycling by catalyzing mono-ufmylation of RPL26/uL24 subunit of the 60S ribosome. Ufmylation of RPL26/uL24 occurs on free 60S ribosomes following ribosome dissociation: it weakens the junction between post-termination 60S subunits and SEC61 translocons, promoting release and recycling of the large ribosomal subunit from the endoplasmic reticulum membrane. Ufmylation of RPL26/uL24 and subsequent 60S ribosome recycling either take place after normal termination of translation or after ribosome stalling during cotranslational translocation at the endoplasmic reticulum. Involved in reticulophagy in response to endoplasmic reticulum stress by mediating ufmylation of proteins such as CYB5R3 and RPN1, thereby promoting lysosomal degradation of ufmylated proteins. Ufmylation in response to endoplasmic reticulum stress is essential for processes such as hematopoiesis, blood vessel morphogenesis or inflammatory response. Mediates ufmylation of DDRGK1 and CDK5RAP3; the role of these modifications is however unclear: as both DDRGK1 and CDK5RAP3 act as substrate adapters for ufmylation, it is uncertain whether ufmylation of these proteins is a collateral effect or is required for ufmylation. Acts as a negative regulator of T-cell activation by mediating ufmylation and stabilization of PDCD1/PD-1. Also involved in the response to DNA damage: recruited to double-strand break sites following DNA damage and mediates monoufmylation of histone H4 and ufmylation of MRE11. Mediates ufmylation of TP53/p53, promoting its stability. Catalyzes ufmylation of TRIP4, thereby playing a role in nuclear receptor-mediated transcription. Required for hematopoietic stem cell function and hematopoiesis. The polypeptide is E3 UFM1-protein ligase 1 (Mus musculus (Mouse)).